The primary structure comprises 684 residues: Glycine--tRNA ligase beta subunit (684 aa).

The protein belongs to the class-II aminoacyl-tRNA synthetase family. In terms of assembly, tetramer of two alpha and two beta subunits.

It localises to the cytoplasm. It catalyses the reaction tRNA(Gly) + glycine + ATP = glycyl-tRNA(Gly) + AMP + diphosphate. The sequence is that of Glycine--tRNA ligase beta subunit from Pseudomonas syringae pv. tomato (strain ATCC BAA-871 / DC3000).